A 492-amino-acid polypeptide reads, in one-letter code: G2/mitotic-specific cyclin CLB2 (492 aa).

The interval Met-1–Ser-176 is disordered. Polar residues predominate over residues Gln-23–Thr-33. Residues Ile-34–Ser-58 show a composition bias toward low complexity. Polar residues predominate over residues Glu-59–Pro-83. Residues Ala-111 to Asn-135 are compositionally biased toward low complexity. The 127-residue stretch at Glu-208 to Asn-334 folds into the Cyclin N-terminal domain.

It belongs to the cyclin family. Cyclin AB subfamily.

Functionally, 2/mitotic-specific cyclin essential for the control of the cell cycle at the G2/M (mitosis) transition. G2/M cyclins accumulate steadily during G2 and are abruptly destroyed at mitosis. Degradation is necessary for the cell to exit from mitosis. Plays a role in morphogenesis by negatively regulating polarized growth. Through binding to CDC28 regulates cytokinesis, partly by phosphorylation of the actomyosin ring component IQG1. Also involved in the phosphorylation of CDC6 and CDC54. In Candida albicans (strain SC5314 / ATCC MYA-2876) (Yeast), this protein is G2/mitotic-specific cyclin CLB2 (CLB2).